We begin with the raw amino-acid sequence, 561 residues long: Centromere protein T (561 aa).

The segment at methionine 1 to arginine 78 is disordered. Positions arginine 18–threonine 27 are enriched in basic and acidic residues. Polar residues predominate over residues threonine 45 to threonine 57. At serine 47 the chain carries Phosphoserine. Threonine 85 is subject to Phosphothreonine. The interval isoleucine 93–proline 421 is flexible stalk domain. 3 disordered regions span residues alanine 114–leucine 134, histidine 256–alanine 293, and serine 314–lysine 457. Positions arginine 276 to proline 289 are enriched in polar residues. Residues glycine 329–glycine 341 show a composition bias toward basic and acidic residues. Phosphoserine is present on residues serine 343, serine 345, serine 356, serine 373, serine 385, serine 386, and serine 397. Residues threonine 365–threonine 376 show a composition bias toward polar residues. Residues arginine 439 to arginine 450 are compositionally biased toward low complexity.

This sequence belongs to the CENP-T/CNN1 family. Component of the CENPA-CAD complex, composed of CENPI, CENPK, CENPL, CENPO, CENPP, CENPQ, CENPR and CENPS. The CENPA-CAD complex is probably recruited on centromeres by the CENPA-NAC complex, at least composed of CENPA, CENPC, CENPH, CENPM, CENPN, CENPT and CENPU. Identified in a centromeric complex containing histones H2A, H2B, H3 and H4, and at least CENPA, CENPB, CENPC, CENPT, CENPN, HJURP, SUPT16H, SSRP1 and RSF1. Interacts (via N-terminus) with the NDC80 complex. Heterodimer with CENPW; this dimer coassembles with CENPS-CENPX heterodimers at centromeres to form the tetrameric CENP-T-W-S-X complex. Dynamically phosphorylated during the cell cycle. Phosphorylated during G2 phase, metaphase and anaphase, but not during telophase or G1 phase.

Its subcellular location is the nucleus. The protein localises to the chromosome. It localises to the centromere. The protein resides in the kinetochore. Its function is as follows. Component of the CENPA-NAC (nucleosome-associated) complex, a complex that plays a central role in assembly of kinetochore proteins, mitotic progression and chromosome segregation. The CENPA-NAC complex recruits the CENPA-CAD (nucleosome distal) complex and may be involved in incorporation of newly synthesized CENPA into centromeres. Part of a nucleosome-associated complex that binds specifically to histone H3-containing nucleosomes at the centromere, as opposed to nucleosomes containing CENPA. Component of the heterotetrameric CENP-T-W-S-X complex that binds and supercoils DNA, and plays an important role in kinetochore assembly. CENPT has a fundamental role in kinetochore assembly and function. It is one of the inner kinetochore proteins, with most further proteins binding downstream. Required for normal chromosome organization and normal progress through mitosis. The sequence is that of Centromere protein T (CENPT) from Macaca fascicularis (Crab-eating macaque).